Consider the following 366-residue polypeptide: 3-isopropylmalate dehydrogenase (366 aa).

Residue 78-91 coordinates NAD(+); sequence GPQWTHLKGSESPE. Substrate-binding residues include R99, R109, R138, and D227. Mg(2+) contacts are provided by D227, D251, and D255. 285–297 is an NAD(+) binding site; it reads GSAPDIAEKNIAN.

Belongs to the isocitrate and isopropylmalate dehydrogenases family. LeuB type 1 subfamily. In terms of assembly, homodimer. Requires Mg(2+) as cofactor. It depends on Mn(2+) as a cofactor.

The protein localises to the cytoplasm. It catalyses the reaction (2R,3S)-3-isopropylmalate + NAD(+) = 4-methyl-2-oxopentanoate + CO2 + NADH. The protein operates within amino-acid biosynthesis; L-leucine biosynthesis; L-leucine from 3-methyl-2-oxobutanoate: step 3/4. Its function is as follows. Catalyzes the oxidation of 3-carboxy-2-hydroxy-4-methylpentanoate (3-isopropylmalate) to 3-carboxy-4-methyl-2-oxopentanoate. The product decarboxylates to 4-methyl-2 oxopentanoate. The protein is 3-isopropylmalate dehydrogenase of Blochmanniella pennsylvanica (strain BPEN).